The following is a 474-amino-acid chain: tRNA-2-methylthio-N(6)-dimethylallyladenosine synthase (474 aa).

The region spanning 3–120 is the MTTase N-terminal domain; the sequence is KKLHIKTWGC…LPEMIEQVRR (118 aa). The [4Fe-4S] cluster site is built by C12, C49, C83, C157, C161, and C164. A Radical SAM core domain is found at 143 to 375; sequence RAEGPTAFVS…QDRITQQAMR (233 aa). Residues 378 to 441 form the TRAM domain; that stretch reads RHMMGTVQRI…TNSLRGKFIR (64 aa).

The protein belongs to the methylthiotransferase family. MiaB subfamily. As to quaternary structure, monomer. [4Fe-4S] cluster serves as cofactor.

It localises to the cytoplasm. The catalysed reaction is N(6)-dimethylallyladenosine(37) in tRNA + (sulfur carrier)-SH + AH2 + 2 S-adenosyl-L-methionine = 2-methylsulfanyl-N(6)-dimethylallyladenosine(37) in tRNA + (sulfur carrier)-H + 5'-deoxyadenosine + L-methionine + A + S-adenosyl-L-homocysteine + 2 H(+). Functionally, catalyzes the methylthiolation of N6-(dimethylallyl)adenosine (i(6)A), leading to the formation of 2-methylthio-N6-(dimethylallyl)adenosine (ms(2)i(6)A) at position 37 in tRNAs that read codons beginning with uridine. This is tRNA-2-methylthio-N(6)-dimethylallyladenosine synthase from Shewanella oneidensis (strain ATCC 700550 / JCM 31522 / CIP 106686 / LMG 19005 / NCIMB 14063 / MR-1).